Consider the following 173-residue polypeptide: Translation initiation factor IF-3 (173 aa).

Belongs to the IF-3 family. In terms of assembly, monomer.

The protein resides in the cytoplasm. Its function is as follows. IF-3 binds to the 30S ribosomal subunit and shifts the equilibrium between 70S ribosomes and their 50S and 30S subunits in favor of the free subunits, thus enhancing the availability of 30S subunits on which protein synthesis initiation begins. The protein is Translation initiation factor IF-3 of Clostridium tetani (strain Massachusetts / E88).